The following is a 590-amino-acid chain: MTSPLCFWCFCVWAAANWPPGSALQLQPGMPNVCREEQLTLVRLSRPCAQAFIDTIQFWKQGCSGPRWCVGYERRIRYYIIYRHVYATEHQTVFRCCPGWIQWDDEPGCFSSLSSLGTHFSGRECSYQDTRQCLCSQGFHGPHCQYEKNKHLESELTPGFLQKNVDECAVVNGGCQQRCINTLGTFHCECDTGYRRHADERTCIKTDPCAGANGCAHLCQTENGMARCACHAGYQLSEDKKACEDINECAGELAPCAHHCVNSKGSFTCTCHPGFELGADRKHCYRIELEIVNICEKNNGGCSHHCEPAIGGAHCSCNHGHQLDTDGKTCIDFDECESGEACCAQLCINYLGGYECSCEEGFQISSDGCGCDALDEQLEEEEEEIDILRFPGRLAQNPPQPFPYLDPSLTASYEDEDNDDADSEAEGEVQGLTALYRVVCLDGTFGLDCSLSCEDCMNGGRCQEGKSGCLCPAEWTGLICNESSVLRTGEDQQAPAGCLKGFFGKNCKRKCHCANNVHCHRVYGACMCDLGRYGRFCHLSCPRGAYGASCSLECQCVEENTLECSAKNGSCTCKSGYQGNRCQEELPLPA.

The first 23 residues, 1-23 (MTSPLCFWCFCVWAAANWPPGSA), serve as a signal peptide directing secretion. Residues 44–104 (LSRPCAQAFI…RCCPGWIQWD (61 aa)) enclose the EMI domain. The EGF-like 1 domain maps to 105-145 (DEPGCFSSLSSLGTHFSGRECSYQDTRQCLCSQGFHGPHCQ). Cystine bridges form between Cys-109-Cys-125, Cys-135-Cys-144, Cys-168-Cys-179, Cys-175-Cys-188, Cys-190-Cys-203, Cys-209-Cys-219, Cys-215-Cys-228, Cys-230-Cys-243, Cys-249-Cys-260, Cys-256-Cys-269, and Cys-271-Cys-284. Residues 164–204 (NVDECAVVNGGCQQRCINTLGTFHCECDTGYRRHADERTCI) enclose the EGF-like 2; calcium-binding domain. Residues 205–244 (KTDPCAGANGCAHLCQTENGMARCACHAGYQLSEDKKACE) form the EGF-like 3 domain. One can recognise an EGF-like 4; calcium-binding domain in the interval 245–285 (DINECAGELAPCAHHCVNSKGSFTCTCHPGFELGADRKHCY). The interval 393 to 424 (RLAQNPPQPFPYLDPSLTASYEDEDNDDADSE) is disordered. The segment covering 413-424 (YEDEDNDDADSE) has biased composition (acidic residues). Positions 445–481 (FGLDCSLSCEDCMNGGRCQEGKSGCLCPAEWTGLICN) constitute an EGF-like 5 domain. Disulfide bonds link Cys-449–Cys-462, Cys-456–Cys-469, and Cys-471–Cys-480.

The protein is EGF-like and EMI domain-containing protein 1 (Egfem1) of Mus musculus (Mouse).